Reading from the N-terminus, the 376-residue chain is WD repeat-containing protein 86 (376 aa).

WD repeat units follow at residues 13–52 (DHRG…CCAL), 55–94 (GHES…QVYR), 95–132 (GHTS…MSRE), 135–188 (GHRN…CHQT), 191–232 (GHTG…RVFR), 234–272 (HRGS…RTFT), 274–310 (HRRN…LRRV), and 313–350 (GHTF…GAPR).

This is WD repeat-containing protein 86 (WDR86) from Homo sapiens (Human).